Reading from the N-terminus, the 484-residue chain is Cathepsin F (484 aa).

The first 19 residues, 1 to 19 (MAPWLQLLSLLGLLPGAVA), serve as a signal peptide directing secretion. The propeptide at 20-270 (APAQPRAASF…MKQAKSVGDL (251 aa)) is activation peptide. N-linked (GlcNAc...) asparagine glycosylation is found at Asn160 and Asn195. Cystine bridges form between Cys292-Cys333 and Cys326-Cys366. The active site involves Cys295. 2 N-linked (GlcNAc...) asparagine glycosylation sites follow: Asn367 and Asn378. Cys424 and Cys472 are disulfide-bonded. His431 is an active-site residue. Asn440 is a glycosylation site (N-linked (GlcNAc...) asparagine). Residue Asn451 is part of the active site.

It belongs to the peptidase C1 family. High expression levels in heart, skeletal muscle, brain, testis and ovary; moderate levels in prostate, placenta, liver and colon; and no detectable expression in peripheral leukocytes and thymus.

Its subcellular location is the lysosome. It carries out the reaction The recombinant enzyme cleaves synthetic substrates with Phe and Leu (better than Val) in P2, with high specificity constant (kcat/Km) comparable to that of cathepsin L.. In terms of biological role, thiol protease which is believed to participate in intracellular degradation and turnover of proteins. Has also been implicated in tumor invasion and metastasis. The polypeptide is Cathepsin F (CTSF) (Homo sapiens (Human)).